The chain runs to 251 residues: MNNLELEQLINQKLSSDKINDYAPNGLQVEGKTEIKKIITGVTASQALINYAISQNADAILVHHGYFWKSETPCIRGMKGKRIKALLVNDINLYGYHLPLDVHPELGNNAQLAKLLDIENLQPLEKGSVSIPVWGELKEPMTGKDFAEKIEKVLNRKPLICIENGPHLIRKIGICTGGGQGYIDLAAEQGCDAFITGEVSEQTIHSAREQGLYFFSAGHHATERYGIKALGEWLAKEYGFDVEFKDIDNPA.

A divalent metal cation contacts are provided by His63, His64, Asp101, His219, and Glu223.

It belongs to the GTP cyclohydrolase I type 2/NIF3 family. As to quaternary structure, toroid-shaped homohexamer. In the hexamer, 3 dimers assemble to form a ring-like structure surrounding a central hole.

The sequence is that of GTP cyclohydrolase 1 type 2 homolog from Haemophilus influenzae (strain ATCC 51907 / DSM 11121 / KW20 / Rd).